Consider the following 125-residue polypeptide: Protein ApaG (125 aa).

One can recognise an ApaG domain in the interval 1-125 (MINSPRVCIQ…FRLAVPTLIH (125 aa)).

This Citrobacter koseri (strain ATCC BAA-895 / CDC 4225-83 / SGSC4696) protein is Protein ApaG.